The sequence spans 86 residues: MERKQRKVYQGRVVSDKMDKTITVVVETKRNHPVYGKRINYSKKYKAHDENNSAKTGDIVRIMETRPLSKDKRFRLVEIVEEAVII.

Belongs to the universal ribosomal protein uS17 family. Part of the 30S ribosomal subunit.

Its function is as follows. One of the primary rRNA binding proteins, it binds specifically to the 5'-end of 16S ribosomal RNA. This is Small ribosomal subunit protein uS17 from Lactococcus lactis subsp. cremoris (strain SK11).